The following is a 1401-amino-acid chain: DNA-directed RNA polymerase subunit beta' (1401 aa).

Zn(2+) is bound by residues cysteine 70, cysteine 72, cysteine 85, and cysteine 88. Mg(2+)-binding residues include aspartate 460, aspartate 462, and aspartate 464. 4 residues coordinate Zn(2+): cysteine 808, cysteine 882, cysteine 889, and cysteine 892.

It belongs to the RNA polymerase beta' chain family. As to quaternary structure, the RNAP catalytic core consists of 2 alpha, 1 beta, 1 beta' and 1 omega subunit. When a sigma factor is associated with the core the holoenzyme is formed, which can initiate transcription. Mg(2+) is required as a cofactor. Zn(2+) serves as cofactor.

The enzyme catalyses RNA(n) + a ribonucleoside 5'-triphosphate = RNA(n+1) + diphosphate. Functionally, DNA-dependent RNA polymerase catalyzes the transcription of DNA into RNA using the four ribonucleoside triphosphates as substrates. This Legionella pneumophila (strain Paris) protein is DNA-directed RNA polymerase subunit beta'.